Reading from the N-terminus, the 580-residue chain is Cytochrome c oxidase subunit 1 (580 aa).

Residues 1–25 (MTAVAPRVDGHVAPQRPEPTGHARK) form a disordered region. The helical transmembrane segment at 43 to 63 (IMYIIMSFSFFFLGGLMALLI) threads the bilayer. Histidine 87 contacts Fe(II)-heme a. 6 helical membrane-spanning segments follow: residues 90–110 (VMLLLYGTPIVWGFANYVLPL), 122–142 (LNAFGFWITTVGGVAMLAGFL), 171–191 (MWIIGVGATGIGSVASAINML), 214–234 (IFVTSVLALLIFPLLLAAALG), 259–279 (LFWFFGHPEVYVLALPFFGII), and 292–312 (FGYIGLVFATLSIGALSMAVW). Cu cation-binding residues include histidine 265 and tyrosine 269. Residues 265–269 (HPEVY) constitute a cross-link (1'-histidyl-3'-tyrosine (His-Tyr)). Residues histidine 314 and histidine 315 each coordinate Cu cation. The next 2 helical transmembrane spans lie at 316 to 336 (MFVTGAVLLPFFSFMTFLISV) and 360 to 380 (MIWAVGFMSTFLFGGLTGIML). Histidine 398 lines the heme a3 pocket. Helical transmembrane passes span 399-419 (FHYTLFGTVVFASCAGVYFWF), 434-454 (IHFWLTFVGFHGTFMVQHWLG), and 477-497 (ISTIFSFLLGLSVIPFVWNVF). Histidine 400 contacts Fe(II)-heme a.

Belongs to the heme-copper respiratory oxidase family. As to quaternary structure, associates with subunits II, III and IV to form cytochrome c oxidase. It depends on Cu(2+) as a cofactor. The cofactor is heme.

The protein resides in the cell membrane. It catalyses the reaction 4 Fe(II)-[cytochrome c] + O2 + 8 H(+)(in) = 4 Fe(III)-[cytochrome c] + 2 H2O + 4 H(+)(out). Its pathway is energy metabolism; oxidative phosphorylation. In terms of biological role, cytochrome c oxidase is the component of the respiratory chain that catalyzes the reduction of oxygen to water. Subunits 1-3 form the functional core of the enzyme complex. CO I is the catalytic subunit of the enzyme. Electrons originating in cytochrome c are transferred via the copper A center of subunit 2 and heme A of subunit 1 to the bimetallic center formed by heme A3 and copper B. In Corynebacterium efficiens (strain DSM 44549 / YS-314 / AJ 12310 / JCM 11189 / NBRC 100395), this protein is Cytochrome c oxidase subunit 1 (ctaD).